The following is a 142-amino-acid chain: Large ribosomal subunit protein uL11 (142 aa).

Belongs to the universal ribosomal protein uL11 family. In terms of assembly, part of the ribosomal stalk of the 50S ribosomal subunit. Interacts with L10 and the large rRNA to form the base of the stalk. L10 forms an elongated spine to which L12 dimers bind in a sequential fashion forming a multimeric L10(L12)X complex. Post-translationally, one or more lysine residues are methylated.

Functionally, forms part of the ribosomal stalk which helps the ribosome interact with GTP-bound translation factors. The polypeptide is Large ribosomal subunit protein uL11 (Acinetobacter baylyi (strain ATCC 33305 / BD413 / ADP1)).